The sequence spans 193 residues: Orotate phosphoribosyltransferase (193 aa).

Residues arginine 102, lysine 103, lysine 106, histidine 108, and 129 to 137 each bind 5-phospho-alpha-D-ribose 1-diphosphate; that span reads EDVVTTGGS. The orotate site is built by threonine 133 and arginine 161.

The protein belongs to the purine/pyrimidine phosphoribosyltransferase family. PyrE subfamily. As to quaternary structure, homodimer. Requires Mg(2+) as cofactor.

It catalyses the reaction orotidine 5'-phosphate + diphosphate = orotate + 5-phospho-alpha-D-ribose 1-diphosphate. The protein operates within pyrimidine metabolism; UMP biosynthesis via de novo pathway; UMP from orotate: step 1/2. In terms of biological role, catalyzes the transfer of a ribosyl phosphate group from 5-phosphoribose 1-diphosphate to orotate, leading to the formation of orotidine monophosphate (OMP). This is Orotate phosphoribosyltransferase from Prochlorococcus marinus (strain NATL1A).